Here is a 371-residue protein sequence, read N- to C-terminus: Alanine dehydrogenase (371 aa).

Substrate is bound by residues Arg15 and Lys75. His96 acts as the Proton donor/acceptor in catalysis. Residues Ser134, 178-179 (TA), Asp198, Lys203, Ser220, 239-240 (VL), 267-270 (IAID), Arg279, and 298-301 (VANM) contribute to the NAD(+) site. Residue Asp270 is the Proton donor/acceptor of the active site. Residues Glu323 and His327 each coordinate Mg(2+).

Belongs to the AlaDH/PNT family. As to quaternary structure, homohexamer. Trimer of dimers. Mg(2+) is required as a cofactor.

It is found in the secreted. It catalyses the reaction L-alanine + NAD(+) + H2O = pyruvate + NH4(+) + NADH + H(+). It functions in the pathway amino-acid degradation; L-alanine degradation via dehydrogenase pathway; NH(3) and pyruvate from L-alanine: step 1/1. Inhibited by CuSO(4) and ZnCl(2). In terms of biological role, catalyzes the reversible reductive amination of pyruvate to L-alanine. However, since the physiological environment of M.tuberculosis has a neutral pH, it can be assumed that the enzyme catalyzes exclusively the formation of L-alanine. May play a role in cell wall synthesis as L-alanine is an important constituent of the peptidoglycan layer. The protein is Alanine dehydrogenase (ald) of Mycobacterium tuberculosis (strain ATCC 25618 / H37Rv).